Reading from the N-terminus, the 245-residue chain is tRNA (guanine-N(1)-)-methyltransferase (245 aa).

S-adenosyl-L-methionine contacts are provided by residues G111 and 131-136 (IGDYVL).

This sequence belongs to the RNA methyltransferase TrmD family. Homodimer.

The protein resides in the cytoplasm. The enzyme catalyses guanosine(37) in tRNA + S-adenosyl-L-methionine = N(1)-methylguanosine(37) in tRNA + S-adenosyl-L-homocysteine + H(+). Functionally, specifically methylates guanosine-37 in various tRNAs. The chain is tRNA (guanine-N(1)-)-methyltransferase from Staphylococcus haemolyticus (strain JCSC1435).